We begin with the raw amino-acid sequence, 415 residues long: Low affinity tryptophan permease (415 aa).

Residues 1–11 (MTDQAEKKHSA) are Cytoplasmic-facing. The helical transmembrane segment at 12 to 32 (FWGVMVIAGTVIGGGMFALPV) threads the bilayer. Position 33 (Asp-33) is a topological domain, periplasmic. The helical transmembrane segment at 34-54 (LAGAWFFWGAFILIIAWFSML) threads the bilayer. Topologically, residues 55 to 86 (HSGLLLLEANLNYPVGSSFNTITKDLIGNTWN) are cytoplasmic. The chain crosses the membrane as a helical span at residues 87–107 (IISGITVAFVLYILTYAYISA). The Periplasmic portion of the chain corresponds to 108–127 (NGAIISETISMNLGYHANPR). A helical transmembrane segment spans residues 128 to 148 (IVGICTAIFVASVLWLSSLAA). At 149 to 153 (SRITS) the chain is on the cytoplasmic side. Residues 154–174 (LFLGLKIISFVIVFGSFFFQV) form a helical membrane-spanning segment. The Periplasmic segment spans residues 175 to 191 (DYSILRDATSSTAGTSY). The helical transmembrane segment at 192 to 212 (FPYIFMALPVCLASFGFHGNI) threads the bilayer. Residues 213-229 (PSLIICYGKRKDKLIKS) are Cytoplasmic-facing. Residues 230 to 250 (VVFGSLLALVIYLFWLYCTMG) traverse the membrane as a helical segment. The Periplasmic portion of the chain corresponds to 251 to 286 (NIPRESFKAIISSGGNVDSLVKSFLGTKQHGIIEFC). The chain crosses the membrane as a helical span at residues 287 to 307 (LLVFSNLAVASSFFGVTLGLF). Topologically, residues 308–326 (DYLADLFKIDNSHGGRFKT) are cytoplasmic. A helical transmembrane segment spans residues 327 to 347 (VLLTFLPPALLYLIFPNGFIY). Gly-348 is a topological domain (periplasmic). Residues 349–369 (IGGAGLCATIWAVIIPAVLAI) traverse the membrane as a helical segment. Over 370–387 (KARKKFPNQMFTVWGGNL) the chain is Cytoplasmic. The chain crosses the membrane as a helical span at residues 388 to 408 (IPAIVILFGITVILCWFGNVF). At 409-415 (NVLPKFG) the chain is on the periplasmic side.

Belongs to the amino acid/polyamine transporter 2 family. Mtr/TnaB/TyrP permease subfamily.

Its subcellular location is the cell inner membrane. In terms of biological role, involved in tryptophan transport across the cytoplasmic membrane. Plays a role in transporting tryptophan which is to be used catabolically. The chain is Low affinity tryptophan permease (tnaB) from Escherichia coli (strain K12).